The chain runs to 211 residues: Protein GrpE (211 aa).

Residues 1 to 13 are compositionally biased toward basic and acidic residues; that stretch reads MVDKDEEQIKQNV. The disordered stretch occupies residues 1–38; the sequence is MVDKDEEQIKQNVEEDLSSTVEQTGEENIEFPSAPNHP.

It belongs to the GrpE family. As to quaternary structure, homodimer.

It is found in the cytoplasm. Its function is as follows. Participates actively in the response to hyperosmotic and heat shock by preventing the aggregation of stress-denatured proteins, in association with DnaK and GrpE. It is the nucleotide exchange factor for DnaK and may function as a thermosensor. Unfolded proteins bind initially to DnaJ; upon interaction with the DnaJ-bound protein, DnaK hydrolyzes its bound ATP, resulting in the formation of a stable complex. GrpE releases ADP from DnaK; ATP binding to DnaK triggers the release of the substrate protein, thus completing the reaction cycle. Several rounds of ATP-dependent interactions between DnaJ, DnaK and GrpE are required for fully efficient folding. The chain is Protein GrpE from Protochlamydia amoebophila (strain UWE25).